Here is a 275-residue protein sequence, read N- to C-terminus: Probable 2' cyclic ADP-D-ribose synthase TcpB (275 aa).

The span at 17-32 (RLKADDSREMSKEKQA) shows a compositional bias: basic and acidic residues. Positions 17–66 (RLKADDSREMSKEKQAQSKAHKAQQAISSAKSLSTQKSKMSELERATRDG) are disordered. A compositionally biased stretch (low complexity) spans 39–48 (AQQAISSAKS). Residues 55-64 (KMSELERATR) are compositionally biased toward basic and acidic residues. A TIR domain is found at 142-275 (EEYDFFISHA…EIAKELHSLI (134 aa)). Residues 151-152 (AS) and Lys181 each bind NAD(+). Residue Glu217 is part of the active site.

Homodimer. Interacts with host TIRAP, and probably host MYD88. Interacts with host TLR4, abolishes the interaction of host TIRAP with TLR4.

It is found in the secreted. The protein localises to the host cell membrane. It carries out the reaction NAD(+) + H2O = ADP-D-ribose + nicotinamide + H(+). The enzyme catalyses NAD(+) = 2'cADPR + nicotinamide + H(+). In terms of biological role, virulence factor that interferes with host Toll-like receptor 2 (TLR2) and TLR4 signaling, resulting in the reduction of dendritic cell maturation, inhibition of pro-inflammatory cytokine secretion and impaired NF-kappa-B activation in macrophages. Binds host lipids. Has NAD(+) hydrolase (NADase) activity, catalyzes cleavage of NAD(+) into ADP-D-ribose (ADPR) and nicotinamide, also generates a cyclization variant of cyclic ADPR (cADPR), termed v-cADPR (probably 2'cADPR). This Brucella melitensis biotype 2 (strain ATCC 23457) protein is Probable 2' cyclic ADP-D-ribose synthase TcpB (tcpB).